Reading from the N-terminus, the 422-residue chain is Dipeptidase aclJ (422 aa).

Residues 28-45 (LAYSVTLTLVALFFTFAL) traverse the membrane as a helical segment. 2 residues coordinate Zn(2+): His77 and Asp79. Asn96 carries an N-linked (GlcNAc...) asparagine glycan. A disulfide bond links Cys128 and Cys219. A Zn(2+)-binding site is contributed by Glu190. His217 is a binding site for substrate. Asn270 carries N-linked (GlcNAc...) asparagine glycosylation. A disulfide bond links Cys287 and Cys319. Residues Arg291 and Asp351 each contribute to the substrate site.

The protein belongs to the metallo-dependent hydrolases superfamily. Peptidase M19 family. Requires Zn(2+) as cofactor.

It localises to the membrane. It catalyses the reaction an L-aminoacyl-L-amino acid + H2O = 2 an L-alpha-amino acid. It functions in the pathway mycotoxin biosynthesis. Functionally, dipeptidase; part of the gene cluster that mediates the biosynthesis of aspirochlorine (or antibiotic A30641), an unusual halogenated spiro compound with distinctive antifungal properties due to selective inhibition of protein biosynthesis, and which is also active against bacteria, viruses, and murine tumor cells. The non-ribosomal peptide synthetase (NRPS) aclP is responsible the formation of the diketopiperazine (DKP) core from the condensation of 2 phenylalanine residues. One Phe residue is tailored into chlorotyrosine by hydroxylation and chlorination, whereas the second Phe undergoes an unprecedented C-C bond cleavage to be converted into glycine. After formation of the DKP, sulfur is incorporated into the DKP by conjugation with glutathione by aclG, followed by its stepwise degradation to the thiol by aclI, aclJ and aclK, and the dithiol oxidation by aclT. In addition, oxygenases (aclB, aclC, aclL and aclO) and O-methyltransferases (aclM and aclU) act as tailoring enzymes to produce the intermediate dechloroaspirochlorine. Ultimately, chlorination of dechloroaspirochlorine by the halogenase aclH is the last step in the aspirochlorine pathway. The chain is Dipeptidase aclJ from Aspergillus oryzae (strain ATCC 42149 / RIB 40) (Yellow koji mold).